The sequence spans 1035 residues: Calcium-transporting ATPase 7, plasma membrane-type (1035 aa).

Residues 1–166 (MECADYFIGS…KGFFRHVWDA (166 aa)) lie on the Cytoplasmic side of the membrane. A helical membrane pass occupies residues 167–187 (LADVFLIVLLVCAAVSLAFGI). Over 188-194 (KEHGIKD) the chain is Extracellular. The chain crosses the membrane as a helical span at residues 195–215 (GWYDGVSIFLAVFLVAAVSAV). Residues 216–348 (SNHSQGKRFD…DPTPLQERLE (133 aa)) lie on the Cytoplasmic side of the membrane. Residues 349–369 (GLTSSIGKVGIAVAVLVFAVL) traverse the membrane as a helical segment. Topologically, residues 370 to 395 (TARHFTGSTRDEQGNALFDKRNVTFN) are extracellular. An N-linked (GlcNAc...) asparagine glycan is attached at Asn391. Residues 396–416 (AVFSGLVGIFQQAVTIIVVAI) traverse the membrane as a helical segment. Residues 417 to 818 (PEGLPLAVTL…GRCVYNNIQK (402 aa)) are Cytoplasmic-facing. The active-site 4-aspartylphosphate intermediate is Asp460. Mg(2+) is bound by residues Asp761 and Asp765. Residues 819–839 (FIQFQLTVNVAALVINFVSAV) form a helical membrane-spanning segment. The Extracellular segment spans residues 840–845 (TTGRMP). Residues 846–866 (LTTVQLLWVNLIMDTMGALAL) form a helical membrane-spanning segment. Over 867 to 887 (ATDTPTAGLMRRPPIGRAAPL) the chain is Cytoplasmic. A helical transmembrane segment spans residues 888-910 (ISNAMWRNLAAQAAYQVAVLLAL). Topologically, residues 911 to 919 (QYRGFGGAG) are extracellular. Residues 920 to 940 (AGERANGTMIFNAFVLCQVFN) form a helical membrane-spanning segment. At 941–960 (EFNAREIERRNVFAGVHRNR) the chain is on the cytoplasmic side. A helical membrane pass occupies residues 961-981 (MFLGIVAVTVALQVVMVELLT). Topologically, residues 982–990 (KFAGTERLG) are extracellular. A helical membrane pass occupies residues 991–1011 (WGQWGACVGIAAVSWPIGWAV). Topologically, residues 1012-1035 (KCIPVPERPFHEIITARRRRRRST) are cytoplasmic.

This sequence belongs to the cation transport ATPase (P-type) (TC 3.A.3) family. Type IIB subfamily.

The protein localises to the golgi apparatus membrane. It carries out the reaction Ca(2+)(in) + ATP + H2O = Ca(2+)(out) + ADP + phosphate + H(+). With respect to regulation, activated by calmodulin. Its function is as follows. This magnesium-dependent enzyme catalyzes the hydrolysis of ATP coupled with the translocation of calcium from the cytosol out of the cell, into the endoplasmic reticulum, or into organelles. Involved in salt stress tolerance. The protein is Calcium-transporting ATPase 7, plasma membrane-type of Oryza sativa subsp. japonica (Rice).